An 828-amino-acid polypeptide reads, in one-letter code: Periplasmic nitrate reductase (828 aa).

The segment at residues 1 to 31 (MKLSRRHFMKANAVAAAAAVAGITIPIAVRA) is a signal peptide (tat-type signal). The 4Fe-4S Mo/W bis-MGD-type domain maps to 39–95 (IHWDKAPCRFCGVGCGVLVGTQNGRIVASQGDPDAPVNRGLNCIKGYFLPKIMYGQD). 4 residues coordinate [4Fe-4S] cluster: cysteine 46, cysteine 49, cysteine 53, and cysteine 81. Mo-bis(molybdopterin guanine dinucleotide) is bound by residues lysine 83, glutamine 150, asparagine 175, cysteine 179, 212–219 (WGSNMAEM), 243–247 (STYQH), 262–264 (QTD), methionine 372, glutamine 376, asparagine 482, 508–509 (SD), lysine 531, aspartate 558, and 718–727 (TGRVLEHWHT). Phenylalanine 794 lines the substrate pocket. The Mo-bis(molybdopterin guanine dinucleotide) site is built by asparagine 802 and lysine 819.

It belongs to the prokaryotic molybdopterin-containing oxidoreductase family. NasA/NapA/NarB subfamily. In terms of assembly, component of the periplasmic nitrate reductase NapAB complex composed of NapA and NapB. Requires [4Fe-4S] cluster as cofactor. Mo-bis(molybdopterin guanine dinucleotide) serves as cofactor. Predicted to be exported by the Tat system. The position of the signal peptide cleavage has not been experimentally proven.

The protein resides in the periplasm. The enzyme catalyses 2 Fe(II)-[cytochrome] + nitrate + 2 H(+) = 2 Fe(III)-[cytochrome] + nitrite + H2O. Catalytic subunit of the periplasmic nitrate reductase complex NapAB. Receives electrons from NapB and catalyzes the reduction of nitrate to nitrite. The protein is Periplasmic nitrate reductase of Pectobacterium carotovorum subsp. carotovorum (strain PC1).